Here is a 170-residue protein sequence, read N- to C-terminus: 3-hydroxyanthranilate 3,4-dioxygenase (170 aa).

Residue R44 participates in O2 binding. The Fe cation site is built by H48, E54, and H92. Residue E54 participates in substrate binding. R96 and E106 together coordinate substrate. A divalent metal cation contacts are provided by C121, C124, C158, and C161.

Belongs to the 3-HAO family. Fe(2+) serves as cofactor.

The protein resides in the cytoplasm. It carries out the reaction 3-hydroxyanthranilate + O2 = (2Z,4Z)-2-amino-3-carboxymuconate 6-semialdehyde. The protein operates within cofactor biosynthesis; NAD(+) biosynthesis; quinolinate from L-kynurenine: step 3/3. Its function is as follows. Catalyzes the oxidative ring opening of 3-hydroxyanthranilate to 2-amino-3-carboxymuconate semialdehyde, which spontaneously cyclizes to quinolinate. The chain is 3-hydroxyanthranilate 3,4-dioxygenase from Scheffersomyces stipitis (strain ATCC 58785 / CBS 6054 / NBRC 10063 / NRRL Y-11545) (Yeast).